The following is a 75-amino-acid chain: Protein SlyX homolog (75 aa).

It belongs to the SlyX family.

This is Protein SlyX homolog from Vibrio campbellii (strain ATCC BAA-1116).